The chain runs to 150 residues: Avidin-related protein 2 (150 aa).

The signal sequence occupies residues 1-24 (MVHATSPLLLLLLLSLALVAPSLS). Residues 26-147 (RKCSLTGEWD…GNNDFTRQHT (122 aa)) form the Avidin-like domain. An intrachain disulfide couples C28 to C105. Residues N36, S40, Y57, T59, and D63 each coordinate biotin. 2 N-linked (GlcNAc...) asparagine glycosylation sites follow: N67 and N93. Biotin-binding residues include S95, S99, and N140.

In terms of assembly, homotetramer. Glycosylated.

It is found in the secreted. Its function is as follows. Forms a strong non-covalent specific complex with biotin. The sequence is that of Avidin-related protein 2 (AVR2) from Gallus gallus (Chicken).